Consider the following 461-residue polypeptide: Decaprenylphosphoryl-beta-D-ribose oxidase (461 aa).

One can recognise an FAD-binding PCMH-type domain in the interval 19–194 (TAPSVANVLR…MRATIEMTPT (176 aa)). Residues 53–63 (ARGLGRSYGDN), glycine 117, 122–125 (TVGG), 129–132 (CDIH), isoleucine 184, and tyrosine 415 each bind FAD.

This sequence belongs to the DprE1 family. In terms of assembly, monomer. Although forming apparent dimer in crystals, DprE1 does not dimerize appreciably in solution. Interacts with DprE2 to form an epimerase complex.

Its subcellular location is the periplasm. It catalyses the reaction trans,octa-cis-decaprenylphospho-beta-D-ribofuranose + FAD + H(+) = trans,octa-cis-decaprenylphospho-beta-D-erythro-pentofuranosid-2-ulose + FADH2. The protein operates within cell wall biogenesis; cell wall polysaccharide biosynthesis. With respect to regulation, is inhibited by 8-nitro-benzothiazinones (BTZs) such as BTZ043 and PBTZ169; BTZs are a new class of antimycobacterial agents that kill M.tuberculosis in vitro, ex vivo, and in mouse models of tuberculosis. Is also inhibited by dinitrobenzamide derivatives (DNBs), which thus block formation of both cell-wall lipoarabinomannan and arabinogalactan via inhibition of decaprenyl-phospho-arabinose (DPA) synthesis; DNBs show high activity against intracellular growth of M.tuberculosis inside macrophages, including extensively drug resistant (XDR) strains. BTZs and DNBs are suicide inhibitors that act via covalent modification of DprE1; the essential nitro group of these compounds is reduced by DprE1 to a nitroso group, which then specifically reacts with Cys-387 of DprE1 to form an irreversible semimercaptal adduct. Many other compounds with diverse scaffolds were found to act as either covalent (e.g. nitroquinoxalines, nitroimidazoles) or non-covalent (e.g. the benzothiazole derivative TCA1, the 2-carboxyquinoxaline Ty38C, 8-pyrrole-benzothiazinones, 1,4-azaindoles, pyrazolopyridones, 4-aminoquinolone piperidine amides) DprE1 inhibitors. Functionally, component of the DprE1-DprE2 complex that catalyzes the 2-step epimerization of decaprenyl-phospho-ribose (DPR) to decaprenyl-phospho-arabinose (DPA), a key precursor that serves as the arabinose donor required for the synthesis of cell-wall arabinans. DprE1 catalyzes the first step of epimerization, namely FAD-dependent oxidation of the C2' hydroxyl of DPR to yield the keto intermediate decaprenyl-phospho-2'-keto-D-arabinose (DPX). The intermediate DPX is then transferred to DprE2 subunit of the epimerase complex, most probably through a 'substrate channel' at the interface of DprE1-DprE2 complex. Can also use farnesyl-phosphoryl-beta-D-ribofuranose (FPR) as substrate in vitro. In terms of biological role, dprE1 is a highly vulnerable and fully validated tuberculosis drug target. The polypeptide is Decaprenylphosphoryl-beta-D-ribose oxidase (Mycobacterium tuberculosis (strain CDC 1551 / Oshkosh)).